The chain runs to 168 residues: CDP-archaeol synthase (168 aa).

Helical transmembrane passes span 7-27 (PLES…PVLL), 55-75 (GLAT…SATC), 80-100 (YAAG…GAFI), 109-129 (GAPA…LALY), and 130-150 (AAGY…VIAL).

The protein belongs to the CDP-archaeol synthase family. It depends on Mg(2+) as a cofactor.

It is found in the cell membrane. The catalysed reaction is 2,3-bis-O-(geranylgeranyl)-sn-glycerol 1-phosphate + CTP + H(+) = CDP-2,3-bis-O-(geranylgeranyl)-sn-glycerol + diphosphate. It functions in the pathway membrane lipid metabolism; glycerophospholipid metabolism. Catalyzes the formation of CDP-2,3-bis-(O-geranylgeranyl)-sn-glycerol (CDP-archaeol) from 2,3-bis-(O-geranylgeranyl)-sn-glycerol 1-phosphate (DGGGP) and CTP. This reaction is the third ether-bond-formation step in the biosynthesis of archaeal membrane lipids. The protein is CDP-archaeol synthase of Hyperthermus butylicus (strain DSM 5456 / JCM 9403 / PLM1-5).